A 234-amino-acid polypeptide reads, in one-letter code: MKPKVVAIVPAGGSGRRMQSSNPKQYFLINGMPVLVHTLLRLQQFPLIDEILLVVPHSDMVFVRDNIEKPYQLTKIRGIVAGGRERQDSVRNGLKCVVEKDEIVVIHDGVRPFVTEKILSRVIDAAHRSGAAIAAVPAMDTVKEVHSDGHISVTLDRKRIWLAQTPQAFHRRIIQEAYKKAVQDDYYGTDDASLVERLGIPVEVVPGSCTNIKITTPDDLILAEAFLKKEEGRI.

This sequence belongs to the IspD/TarI cytidylyltransferase family. IspD subfamily.

The enzyme catalyses 2-C-methyl-D-erythritol 4-phosphate + CTP + H(+) = 4-CDP-2-C-methyl-D-erythritol + diphosphate. It participates in isoprenoid biosynthesis; isopentenyl diphosphate biosynthesis via DXP pathway; isopentenyl diphosphate from 1-deoxy-D-xylulose 5-phosphate: step 2/6. Catalyzes the formation of 4-diphosphocytidyl-2-C-methyl-D-erythritol from CTP and 2-C-methyl-D-erythritol 4-phosphate (MEP). The sequence is that of 2-C-methyl-D-erythritol 4-phosphate cytidylyltransferase from Syntrophus aciditrophicus (strain SB).